A 363-amino-acid chain; its full sequence is Dihydroorotate dehydrogenase (quinone) (363 aa).

FMN-binding positions include 77 to 81 (AGMDK) and T101. K81 lines the substrate pocket. 126-130 (NRMGF) serves as a coordination point for substrate. Positions 155 and 188 each coordinate FMN. Substrate is bound at residue N188. The active-site Nucleophile is the S191. N193 contributes to the substrate binding site. FMN-binding residues include K234 and T262. A substrate-binding site is contributed by 263 to 264 (NT). FMN is bound by residues G287, G316, and 337 to 338 (YT).

This sequence belongs to the dihydroorotate dehydrogenase family. Type 2 subfamily. Monomer. The cofactor is FMN.

Its subcellular location is the cell membrane. The enzyme catalyses (S)-dihydroorotate + a quinone = orotate + a quinol. The protein operates within pyrimidine metabolism; UMP biosynthesis via de novo pathway; orotate from (S)-dihydroorotate (quinone route): step 1/1. Functionally, catalyzes the conversion of dihydroorotate to orotate with quinone as electron acceptor. In Chloroflexus aurantiacus (strain ATCC 29366 / DSM 635 / J-10-fl), this protein is Dihydroorotate dehydrogenase (quinone).